The following is a 334-amino-acid chain: Holliday junction branch migration complex subunit RuvB (334 aa).

Residues 4–184 (ADRLIQPQLQ…FGIPLRLEFY (181 aa)) are large ATPase domain (RuvB-L). ATP is bound by residues Arg24, Gly65, Lys68, Thr69, Thr70, 131–133 (EDY), Arg174, Tyr184, and Arg221. Thr69 provides a ligand contact to Mg(2+). The small ATPAse domain (RuvB-S) stretch occupies residues 185-255 (NVKDLSTIVT…VAELALNLLD (71 aa)). Residues 258 to 334 (GEGFDYMDRK…YVHFGMIKPE (77 aa)) are head domain (RuvB-H). The DNA site is built by Arg294, Arg313, and Arg318.

The protein belongs to the RuvB family. In terms of assembly, homohexamer. Forms an RuvA(8)-RuvB(12)-Holliday junction (HJ) complex. HJ DNA is sandwiched between 2 RuvA tetramers; dsDNA enters through RuvA and exits via RuvB. An RuvB hexamer assembles on each DNA strand where it exits the tetramer. Each RuvB hexamer is contacted by two RuvA subunits (via domain III) on 2 adjacent RuvB subunits; this complex drives branch migration. In the full resolvosome a probable DNA-RuvA(4)-RuvB(12)-RuvC(2) complex forms which resolves the HJ.

Its subcellular location is the cytoplasm. It carries out the reaction ATP + H2O = ADP + phosphate + H(+). The RuvA-RuvB-RuvC complex processes Holliday junction (HJ) DNA during genetic recombination and DNA repair, while the RuvA-RuvB complex plays an important role in the rescue of blocked DNA replication forks via replication fork reversal (RFR). RuvA specifically binds to HJ cruciform DNA, conferring on it an open structure. The RuvB hexamer acts as an ATP-dependent pump, pulling dsDNA into and through the RuvAB complex. RuvB forms 2 homohexamers on either side of HJ DNA bound by 1 or 2 RuvA tetramers; 4 subunits per hexamer contact DNA at a time. Coordinated motions by a converter formed by DNA-disengaged RuvB subunits stimulates ATP hydrolysis and nucleotide exchange. Immobilization of the converter enables RuvB to convert the ATP-contained energy into a lever motion, pulling 2 nucleotides of DNA out of the RuvA tetramer per ATP hydrolyzed, thus driving DNA branch migration. The RuvB motors rotate together with the DNA substrate, which together with the progressing nucleotide cycle form the mechanistic basis for DNA recombination by continuous HJ branch migration. Branch migration allows RuvC to scan DNA until it finds its consensus sequence, where it cleaves and resolves cruciform DNA. The chain is Holliday junction branch migration complex subunit RuvB from Shewanella oneidensis (strain ATCC 700550 / JCM 31522 / CIP 106686 / LMG 19005 / NCIMB 14063 / MR-1).